Here is a 601-residue protein sequence, read N- to C-terminus: Elongation factor 4 (601 aa).

The region spanning 7 to 189 (RNIRNFSIIA…AIVHRIPPPK (183 aa)) is the tr-type G domain. Residues 19–24 (DHGKST) and 136–139 (NKID) contribute to the GTP site.

Belongs to the TRAFAC class translation factor GTPase superfamily. Classic translation factor GTPase family. LepA subfamily.

It localises to the cell inner membrane. It carries out the reaction GTP + H2O = GDP + phosphate + H(+). In terms of biological role, required for accurate and efficient protein synthesis under certain stress conditions. May act as a fidelity factor of the translation reaction, by catalyzing a one-codon backward translocation of tRNAs on improperly translocated ribosomes. Back-translocation proceeds from a post-translocation (POST) complex to a pre-translocation (PRE) complex, thus giving elongation factor G a second chance to translocate the tRNAs correctly. Binds to ribosomes in a GTP-dependent manner. The sequence is that of Elongation factor 4 from Xanthomonas axonopodis pv. citri (strain 306).